We begin with the raw amino-acid sequence, 282 residues long: Flagellin (282 aa).

The protein belongs to the bacterial flagellin family.

It localises to the secreted. The protein localises to the bacterial flagellum. Functionally, flagellin is the subunit protein which polymerizes to form the filaments of bacterial flagella. The flagellum is required to cause a persistent disease in a murine model of infection. The protein is Flagellin (fliC) of Brucella melitensis biotype 1 (strain ATCC 23456 / CCUG 17765 / NCTC 10094 / 16M).